The sequence spans 314 residues: Replication initiation protein (314 aa).

Residues 1 to 10 are compositionally biased toward polar residues; it reads MSKNNHANHS. The disordered stretch occupies residues 1 to 25; the sequence is MSKNNHANHSNHLENHDLDNFSKTG. A compositionally biased stretch (basic and acidic residues) spans 11–20; that stretch reads NHLENHDLDN.

Belongs to the plasmid replication initiation factor family.

Functionally, this protein is probably a specific topoisomerase involved in initiating replication. This protein is specifically required and may be rate-limiting for replication of the plasmid in vivo. The polypeptide is Replication initiation protein (repN) (Staphylococcus aureus).